Consider the following 437-residue polypeptide: Histidinol dehydrogenase (437 aa).

Positions 133, 191, and 214 each coordinate NAD(+). Positions 240, 262, and 265 each coordinate substrate. Zn(2+)-binding residues include Q262 and H265. Catalysis depends on proton acceptor residues E329 and H330. Residues H330, D363, E417, and H422 each contribute to the substrate site. Zn(2+) is bound at residue D363. A Zn(2+)-binding site is contributed by H422.

Belongs to the histidinol dehydrogenase family. Homodimer. Requires Zn(2+) as cofactor.

The enzyme catalyses L-histidinol + 2 NAD(+) + H2O = L-histidine + 2 NADH + 3 H(+). It functions in the pathway amino-acid biosynthesis; L-histidine biosynthesis; L-histidine from 5-phospho-alpha-D-ribose 1-diphosphate: step 9/9. In terms of biological role, catalyzes the sequential NAD-dependent oxidations of L-histidinol to L-histidinaldehyde and then to L-histidine. The polypeptide is Histidinol dehydrogenase (Blochmanniella floridana).